The sequence spans 227 residues: Urease accessory protein UreF (227 aa).

Belongs to the UreF family. As to quaternary structure, ureD, UreF and UreG form a complex that acts as a GTP-hydrolysis-dependent molecular chaperone, activating the urease apoprotein by helping to assemble the nickel containing metallocenter of UreC. The UreE protein probably delivers the nickel.

Its subcellular location is the cytoplasm. In terms of biological role, required for maturation of urease via the functional incorporation of the urease nickel metallocenter. The protein is Urease accessory protein UreF of Methylobacillus flagellatus (strain ATCC 51484 / DSM 6875 / VKM B-1610 / KT).